The sequence spans 334 residues: Transcription factor MYB92 (334 aa).

HTH myb-type domains are found at residues 9–61 and 62–116; these read DSGL…TNYL and RPDI…KKKL. 2 consecutive DNA-binding regions (H-T-H motif) follow at residues 37-61 and 89-112; these read WRAL…TNYL and WSTI…NTHL.

Interacts with FBX5. Highly expressed in roots and at lower levels in stems, flowers and siliques.

Its subcellular location is the nucleus. Its function is as follows. Probable transcription factor. This Arabidopsis thaliana (Mouse-ear cress) protein is Transcription factor MYB92.